Consider the following 302-residue polypeptide: Ribosomal RNA small subunit methyltransferase H (302 aa).

S-adenosyl-L-methionine-binding positions include 36 to 38, D56, F84, D99, and Q106; that span reads GGH.

It belongs to the methyltransferase superfamily. RsmH family.

It localises to the cytoplasm. It catalyses the reaction cytidine(1402) in 16S rRNA + S-adenosyl-L-methionine = N(4)-methylcytidine(1402) in 16S rRNA + S-adenosyl-L-homocysteine + H(+). In terms of biological role, specifically methylates the N4 position of cytidine in position 1402 (C1402) of 16S rRNA. This Flavobacterium johnsoniae (strain ATCC 17061 / DSM 2064 / JCM 8514 / BCRC 14874 / CCUG 350202 / NBRC 14942 / NCIMB 11054 / UW101) (Cytophaga johnsonae) protein is Ribosomal RNA small subunit methyltransferase H.